The sequence spans 1270 residues: Nuclear exosome regulator NRDE2 (1270 aa).

Disordered stretches follow at residues 1–22 and 119–209; these read MFRA…ENPD and SVKS…HTLM. Residues 119 to 135 are compositionally biased toward polar residues; sequence SVKSLNGCQDPPETSQQ. The segment covering 164-184 has biased composition (basic residues); sequence QRSRSREKKRRKKERRRKRSS. Basic and acidic residues predominate over residues 192–204; the sequence is RSRDRSSRARDTS.

The protein belongs to the NRDE2 family. As to quaternary structure, interacts with nrde-3.

It is found in the nucleus. The protein localises to the nucleus speckle. Its subcellular location is the nucleolus. Protein of the nuclear speckles that regulates RNA exosomal degradation. Involved in short interfering RNAs-mediated silencing in nuclei. Functions with nrde-3 in the nuclear RNA-mediated gene silencing (RNAi) pathway to regulate gene expression via inhibition of RNA polymerases I and II during the elongation phase of transcription. Required for exogenous RNAi-induced H3K27 methylation. In Caenorhabditis elegans, this protein is Nuclear exosome regulator NRDE2 (nrde-2).